Here is a 124-residue protein sequence, read N- to C-terminus: Testis-expressed protein 54 (124 aa).

A compositionally biased stretch (basic and acidic residues) spans 1 to 10 (MGCCQDKDFE). Disordered regions lie at residues 1–77 (MGCC…SNES) and 90–124 (FGRR…PEKG). Acidic residues predominate over residues 11–30 (MSDEQSKEEESEDGREDETT). Basic and acidic residues-rich tracts occupy residues 34–50 (RGPR…RGEL) and 101–124 (RQPD…PEKG).

In terms of tissue distribution, expressed in Testis.

This is Testis-expressed protein 54 from Homo sapiens (Human).